The sequence spans 359 residues: MADQDPAGISPLQQMVASGTGAVVTSLFMTPLDVVKVRLQSQRPSMASELMPSSRLWSLSYTKLPSSLQSTGKCLLYCNGVLEPLYLCPNGARCATWFQDPTRFTGTMDAFVKIVRHEGTRTLWSGLPATLVMTVPATAIYFTAYDQLKAFLCGRALTSDLYAPMVAGALARLGTVTVISPLELMRTKLQAQHVSYRELGACVRTAVAQGGWRSLWLGWGPTALRDVPFSALYWFNYELVKSWLNGFRPKDQTSVGMSFVAGGISGTVAAVLTLPFDVVKTQRQVALGAMEAVRVNPLHVDSTWLLLRRIRAESGTKGLFAGFLPRIIKAAPSCAIMISTYEFGKSFFQRLNQDRLLGG.

Residues 1-14 are Mitochondrial intermembrane-facing; it reads MADQDPAGISPLQQ. Solcar repeat units lie at residues 9–151, 159–243, and 253–347; these read ISPL…LKAF, SDLY…VKSW, and TSVG…GKSF. A helical transmembrane segment spans residues 15-35; it reads MVASGTGAVVTSLFMTPLDVV. The Mitochondrial matrix portion of the chain corresponds to 36–121; the sequence is KVRLQSQRPS…VKIVRHEGTR (86 aa). Residues Cys-74, Cys-78, Cys-88, and Cys-94 each contribute to the [2Fe-2S] cluster site. Residues 122–142 traverse the membrane as a helical segment; that stretch reads TLWSGLPATLVMTVPATAIYF. At 143 to 160 the chain is on the mitochondrial intermembrane side; it reads TAYDQLKAFLCGRALTSD. A helical transmembrane segment spans residues 161–181; the sequence is LYAPMVAGALARLGTVTVISP. Residues 182 to 214 lie on the Mitochondrial matrix side of the membrane; sequence LELMRTKLQAQHVSYRELGACVRTAVAQGGWRS. A helical transmembrane segment spans residues 215–235; the sequence is LWLGWGPTALRDVPFSALYWF. At 236–258 the chain is on the mitochondrial intermembrane side; it reads NYELVKSWLNGFRPKDQTSVGMS. The chain crosses the membrane as a helical span at residues 259–279; the sequence is FVAGGISGTVAAVLTLPFDVV. The Mitochondrial matrix segment spans residues 280–317; the sequence is KTQRQVALGAMEAVRVNPLHVDSTWLLLRRIRAESGTK. Residues 318–338 traverse the membrane as a helical segment; that stretch reads GLFAGFLPRIIKAAPSCAIMI. Residues 339-359 lie on the Mitochondrial intermembrane side of the membrane; that stretch reads STYEFGKSFFQRLNQDRLLGG.

It belongs to the mitochondrial carrier (TC 2.A.29) family. In terms of processing, cleaved and degraded by AFG3L2; degradation by AFG3L2 is regulated by the ability of SLC25A39 to bind iron-sulfur. In absence of mitochondrial glutathione, SLC25A39 binds iron-sulfur, preventing cleavage and degradation by AFG3L2. The presence of mitochondrial glutathione prevents iron-sulfur-binding to SLC25A39, promoting cleavage and degradation by AFG3L2. In terms of tissue distribution, expressed in many tissues. Abundant in testis and kidney.

It localises to the mitochondrion inner membrane. The catalysed reaction is glutathione(in) = glutathione(out). The activity of SLC25A39 is regulated by levels of mitochondrial glutathione via its ability to bind [2Fe-2S] iron-sulfur cluster. Upon physiological levels of mitochondrial glutathione, glutathione prevents iron-sulfur-binding to SLC25A39 promoting cleavage and degradation by AFG3L2. Upon depletion of mitochondrial glutathione, SLC25A39 binds iron-sulfur, preventing cleavage and degradation by AFG3L2. Its function is as follows. Mitochondrial transporter required for glutathione import into mitochondria. Glutathione, which plays key roles in oxidative metabolism, is produced exclusively in the cytosol and is imported in many organelles. Mitochondrial glutathione is required for the activity and stability of proteins containing iron-sulfur clusters, as well as erythropoiesis. The protein is Mitochondrial glutathione transporter SLC25A39 of Homo sapiens (Human).